A 64-amino-acid polypeptide reads, in one-letter code: Temporin-ALe (64 aa).

Residues 1 to 22 (MFTLKKSLLLLFFLGTINLSLC) form the signal peptide. A propeptide spanning residues 23–47 (EQERNAEEERRDEPDERNAEVEKRF) is cleaved from the precursor. L62 carries the post-translational modification Leucine amide.

Expressed by the skin glands.

Its subcellular location is the secreted. Antimicrobial peptide with activity against Gram-positive and Gram-negative bacteria and against fungi. Has been tested against S.aureus (MIC=1.25 ug/mL), B.pumilus (MIC=5.0 ug/mL), B.cereus (MIC=15.0 ug/mL), E.coli (MIC=1.25 ug/mL), B.dysenteriae (MIC=5.0 ug/mL), A.cacoaceticus (MIC=15.0 ug/mL), P.aeruginosa (MIC=5.0 ug/mL) and C.albicans (MIC=1.25 ug/mL). Also shows a weak hemolytic activity. The chain is Temporin-ALe from Amolops loloensis (Lolokou Sucker Frog).